The chain runs to 330 residues: Flotillin-like protein FloA (330 aa).

2 helical membrane-spanning segments follow: residues 6–26 and 28–48; these read LLLFVIIAAGLIVLSIFFTFV and VMLWISALAAGVRVSIFTLVG.

Belongs to the flotillin-like FloA family. Homooligomerizes.

The protein resides in the cell membrane. Its subcellular location is the membrane raft. Its function is as follows. Found in functional membrane microdomains (FMM) that may be equivalent to eukaryotic membrane rafts. FMMs are highly dynamic and increase in number as cells age. Flotillins are thought to be important factors in membrane fluidity. This chain is Flotillin-like protein FloA, found in Bacillus pumilus (strain SAFR-032).